The chain runs to 139 residues: Basic phospholipase A2 beta-bungarotoxin A2 chain (139 aa).

The first 9 residues, 1–9 (AVCVSLLGA), serve as a signal peptide directing secretion. A propeptide spanning residues 10–17 (ANIPPHPF) is cleaved from the precursor. Tyr45, Gly47, and Gly49 together coordinate Ca(2+). Cys46 and Cys62 are oxidised to a cystine. His65 is an active-site residue. A Ca(2+)-binding site is contributed by Asp66.

It belongs to the phospholipase A2 family. Group I subfamily. D49 sub-subfamily. As to quaternary structure, heterodimer; disulfide-linked. The A chains have phospholipase A2 activity and the B chains show homology with the basic protease inhibitors. It depends on Ca(2+) as a cofactor. Expressed by the venom gland.

Its subcellular location is the secreted. The enzyme catalyses a 1,2-diacyl-sn-glycero-3-phosphocholine + H2O = a 1-acyl-sn-glycero-3-phosphocholine + a fatty acid + H(+). Functionally, snake venom phospholipase A2 (PLA2) that shows presynaptic neurotoxicity. PLA2 catalyzes the calcium-dependent hydrolysis of the 2-acyl groups in 3-sn-phosphoglycerides. This Bungarus candidus (Malayan krait) protein is Basic phospholipase A2 beta-bungarotoxin A2 chain.